The sequence spans 266 residues: Undecaprenyl-diphosphatase (266 aa).

7 helical membrane-spanning segments follow: residues 38–58, 80–100, 108–128, 136–156, 176–196, 217–237, and 245–265; these read SDMF…IIYW, LIVA…VLHF, PIAW…WAAA, ITWL…IFPG, AAAT…ASGY, IAFV…LAYI, and FAVY…TGLI.

This sequence belongs to the UppP family.

It is found in the cell inner membrane. The enzyme catalyses di-trans,octa-cis-undecaprenyl diphosphate + H2O = di-trans,octa-cis-undecaprenyl phosphate + phosphate + H(+). Functionally, catalyzes the dephosphorylation of undecaprenyl diphosphate (UPP). Confers resistance to bacitracin. In Rhizobium leguminosarum bv. trifolii (strain WSM2304), this protein is Undecaprenyl-diphosphatase.